A 743-amino-acid polypeptide reads, in one-letter code: Fork head transcription factor 1 (743 aa).

An FHA domain is found at 39-94 (VTMGRKASNSSDCDVHLGDTKAISRQHAKIFYSFPNQRFEISVMGKNGAFVDGEFV). Disordered stretches follow at residues 214 to 291 (QPPK…ATQK), 411 to 450 (GISA…LQNG), and 529 to 743 (QMQG…SSYT). A compositionally biased stretch (polar residues) spans 221–230 (VSPSSIQRLS). The segment at residues 291-385 (KPNLSYANLI…EGNFFRRTKK (95 aa)) is a DNA-binding region (fork-head). Residues 434–443 (SRGENVEDRP) are compositionally biased toward basic and acidic residues. The segment covering 529-539 (QMQGPQQVQQQ) has biased composition (low complexity). Polar residues predominate over residues 562 to 576 (NITSPSPSISVTQRP). Residues 614–624 (SAGPSSVRSSS) are compositionally biased toward low complexity. Composition is skewed to polar residues over residues 625–643 (YNST…QNLH), 670–686 (TGNQ…ASSF), and 695–726 (ENGS…NSSD).

The protein localises to the nucleus. In terms of biological role, acts as a transcriptional activator for ribosomal protein genes (RPG) that contain a HomolE UAS (upstream activating sequence) in addition to a HomolD promoter element; HomolD plays the role of a TATA box in RPG promoters that do not contain a canonical TATA sequence. Binds to HomolE elements with consensus sequence 3'-ACCCTACCCT-5' (or its inverted form AGGGTAGGGT). The sequence is that of Fork head transcription factor 1 from Schizosaccharomyces pombe (strain 972 / ATCC 24843) (Fission yeast).